The sequence spans 315 residues: tRNA dimethylallyltransferase (315 aa).

ATP is bound at residue 10-17 (GPTEVGKT). 12–17 (TEVGKT) lines the substrate pocket. Residues 35–38 (DSMQ) form an interaction with substrate tRNA region.

This sequence belongs to the IPP transferase family. In terms of assembly, monomer. Requires Mg(2+) as cofactor.

It catalyses the reaction adenosine(37) in tRNA + dimethylallyl diphosphate = N(6)-dimethylallyladenosine(37) in tRNA + diphosphate. Its function is as follows. Catalyzes the transfer of a dimethylallyl group onto the adenine at position 37 in tRNAs that read codons beginning with uridine, leading to the formation of N6-(dimethylallyl)adenosine (i(6)A). This Geobacillus thermodenitrificans (strain NG80-2) protein is tRNA dimethylallyltransferase.